Consider the following 291-residue polypeptide: ATP synthase gamma chain (291 aa).

Belongs to the ATPase gamma chain family. In terms of assembly, F-type ATPases have 2 components, CF(1) - the catalytic core - and CF(0) - the membrane proton channel. CF(1) has five subunits: alpha(3), beta(3), gamma(1), delta(1), epsilon(1). CF(0) has three main subunits: a, b and c.

It is found in the cell inner membrane. Produces ATP from ADP in the presence of a proton gradient across the membrane. The gamma chain is believed to be important in regulating ATPase activity and the flow of protons through the CF(0) complex. The protein is ATP synthase gamma chain of Neisseria gonorrhoeae (strain ATCC 700825 / FA 1090).